Consider the following 267-residue polypeptide: 2-keto-3-deoxy-L-rhamnonate aldolase (267 aa).

Histidine 49 acts as the Proton acceptor in catalysis. Position 151 (glutamine 151) interacts with substrate. Glutamate 153 contacts Mg(2+). Alanine 178 and aspartate 179 together coordinate substrate. Mg(2+) is bound at residue aspartate 179.

This sequence belongs to the HpcH/HpaI aldolase family. KDR aldolase subfamily. As to quaternary structure, homohexamer. Mg(2+) serves as cofactor.

It catalyses the reaction 2-dehydro-3-deoxy-L-rhamnonate = (S)-lactaldehyde + pyruvate. Catalyzes the reversible retro-aldol cleavage of 2-keto-3-deoxy-L-rhamnonate (KDR) to pyruvate and lactaldehyde. This chain is 2-keto-3-deoxy-L-rhamnonate aldolase, found in Escherichia coli O17:K52:H18 (strain UMN026 / ExPEC).